We begin with the raw amino-acid sequence, 649 residues long: Mitochondrial Rho GTPase 1 (649 aa).

Topologically, residues 1–623 (MTKETIRVVI…KPTNIDYSSA (623 aa)) are cytoplasmic. The region spanning 3-176 (KETIRVVICG…FYLCQRSISY (174 aa)) is the Miro 1 domain. GTP contacts are provided by residues 12–19 (GDDGVGKT), 61–63 (DTD), and 115–118 (NKCD). EF-hand domains follow at residues 192–227 (SAVA…CFGK) and 320–355 (KGYR…TPGL). Asp-205, Asp-207, Asp-209, Glu-216, Asp-333, Asp-335, Asp-337, and Glu-344 together coordinate Ca(2+). One can recognise a Miro 2 domain in the interval 436 to 601 (RKVFNCFVVG…FKKIIQASLE (166 aa)). GTP contacts are provided by residues 445 to 452 (GKRNSGKS), 481 to 485 (EVTGD), and 550 to 553 (LKAD). Residues 624-644 (VILGSSIGFLALFSYTMIKLL) traverse the membrane as a helical; Anchor for type IV membrane protein segment. At 645 to 649 (KPTQQ) the chain is on the mitochondrial intermembrane side.

Belongs to the mitochondrial Rho GTPase family.

It is found in the mitochondrion outer membrane. In terms of biological role, mitochondrial GTPase involved in mitochondrial trafficking. Probably involved in control of anterograde transport of mitochondria and their subcellular distribution. This is Mitochondrial Rho GTPase 1 (GEM1) from Candida glabrata (strain ATCC 2001 / BCRC 20586 / JCM 3761 / NBRC 0622 / NRRL Y-65 / CBS 138) (Yeast).